We begin with the raw amino-acid sequence, 510 residues long: NAD(P)H-quinone oxidoreductase subunit 2 B, chloroplastic (510 aa).

13 helical membrane-spanning segments follow: residues 24–44 (LLLF…GLIL), 57–77 (IPWL…ALLF), 99–119 (IFQF…VEYI), 124–144 (MAIT…MFLC), 150–170 (ITIF…SGYT), 183–203 (YLLM…WLYG), 227–247 (PGIS…LSPA), 295–315 (WHLL…LIAI), 323–343 (MLAY…IVGD), 347–367 (GYAS…GTFA), 395–415 (ALSS…AGFF), 418–438 (LHLF…IGLL), and 484–504 (MIVC…IIAI).

Belongs to the complex I subunit 2 family. NDH is composed of at least 16 different subunits, 5 of which are encoded in the nucleus.

It is found in the plastid. Its subcellular location is the chloroplast thylakoid membrane. The enzyme catalyses a plastoquinone + NADH + (n+1) H(+)(in) = a plastoquinol + NAD(+) + n H(+)(out). It carries out the reaction a plastoquinone + NADPH + (n+1) H(+)(in) = a plastoquinol + NADP(+) + n H(+)(out). In terms of biological role, NDH shuttles electrons from NAD(P)H:plastoquinone, via FMN and iron-sulfur (Fe-S) centers, to quinones in the photosynthetic chain and possibly in a chloroplast respiratory chain. The immediate electron acceptor for the enzyme in this species is believed to be plastoquinone. Couples the redox reaction to proton translocation, and thus conserves the redox energy in a proton gradient. The chain is NAD(P)H-quinone oxidoreductase subunit 2 B, chloroplastic from Chloranthus spicatus (Chulantree).